A 293-amino-acid polypeptide reads, in one-letter code: Extracellular metalloprotease PODANS_2_14170 (293 aa).

Residues 1–18 (MRFSLALAAAGLAQTAFA) form the signal peptide. Asn60 carries N-linked (GlcNAc...) asparagine glycosylation. His206 provides a ligand contact to Zn(2+). Residue Glu207 is part of the active site. Position 210 (His210) interacts with Zn(2+). Cys242 and Cys269 are joined by a disulfide.

Belongs to the peptidase M43B family.

The protein resides in the secreted. Functionally, secreted metalloproteinase that allows assimilation of proteinaceous substrates. The protein is Extracellular metalloprotease PODANS_2_14170 of Podospora anserina (strain S / ATCC MYA-4624 / DSM 980 / FGSC 10383) (Pleurage anserina).